We begin with the raw amino-acid sequence, 140 residues long: MSMTVEIRVPNLDCEGCASKLRKTLLKLKGVEEVEVEMETQKVTARGYRLEEKKVLKAVRRAGKAAELWPYRLGNSHFASFYKYPSYVTNHYYSDAHRTDPTGGVHTFFHTPADYSVAVAGDEIAASMFSDDNPHACTIM.

In terms of domain architecture, HMA spans 3–67; that stretch reads MTVEIRVPNL…AVRRAGKAAE (65 aa). A metal cation is bound by residues Cys-14 and Cys-17. Position 137 is a cysteine methyl ester (Cys-137). Residue Cys-137 is the site of S-farnesyl cysteine attachment. The propeptide at 138–140 is removed in mature form; it reads TIM.

Belongs to the HIPP family.

Functionally, heavy-metal-binding protein. This is Heavy metal-associated isoprenylated plant protein 31 from Arabidopsis thaliana (Mouse-ear cress).